Consider the following 320-residue polypeptide: MVMIHERKSLKIFAGNSNDKLAKDIADIVGVPLGSAEVGRFSDGEITVNINETVRGIDAFIIQSTSAPVNDNLMELLIMIDAFKRASAGRITAVIPYYGYARQDRKTKARDPITAKLVADILTAAGADRVLTMDLHASQIQGYFDIPLDHLLGVPILGKYFAENGFDQREDVVVVSPDLGSVTRARKFADRIHAPIAIIDKRRPKPNVSEVMHIIGDIKDKTCILIDDMIDTAGTITNGANALVERGAKDVYACCTHAVLSGPAMERIDNSVIKELITLNTIDISKIKPSDKIKVLSVAPVFAEAIRRIYEEISVSKLFD.

ATP-binding positions include 43–45 (DGE) and 102–103 (RQ). Mg(2+)-binding residues include histidine 136 and aspartate 178. Lysine 201 is a catalytic residue. D-ribose 5-phosphate contacts are provided by residues arginine 203, aspartate 227, and 231 to 235 (DTAGT).

The protein belongs to the ribose-phosphate pyrophosphokinase family. Class I subfamily. In terms of assembly, homohexamer. Mg(2+) is required as a cofactor.

It is found in the cytoplasm. It carries out the reaction D-ribose 5-phosphate + ATP = 5-phospho-alpha-D-ribose 1-diphosphate + AMP + H(+). It functions in the pathway metabolic intermediate biosynthesis; 5-phospho-alpha-D-ribose 1-diphosphate biosynthesis; 5-phospho-alpha-D-ribose 1-diphosphate from D-ribose 5-phosphate (route I): step 1/1. In terms of biological role, involved in the biosynthesis of the central metabolite phospho-alpha-D-ribosyl-1-pyrophosphate (PRPP) via the transfer of pyrophosphoryl group from ATP to 1-hydroxyl of ribose-5-phosphate (Rib-5-P). This chain is Ribose-phosphate pyrophosphokinase, found in Clostridium tetani (strain Massachusetts / E88).